A 60-amino-acid polypeptide reads, in one-letter code: Large ribosomal subunit protein bL32 (60 aa).

This sequence belongs to the bacterial ribosomal protein bL32 family.

The sequence is that of Large ribosomal subunit protein bL32 from Borreliella afzelii (strain PKo) (Borrelia afzelii).